We begin with the raw amino-acid sequence, 248 residues long: 2,3-bisphosphoglycerate-dependent phosphoglycerate mutase (248 aa).

Substrate-binding positions include 8–15 (RHGESTWN), 21–22 (TG), Arg60, 87–90 (ERHY), Lys98, 114–115 (RR), and 183–184 (GN). His9 acts as the Tele-phosphohistidine intermediate in catalysis. Glu87 serves as the catalytic Proton donor/acceptor.

This sequence belongs to the phosphoglycerate mutase family. BPG-dependent PGAM subfamily. As to quaternary structure, homodimer.

The catalysed reaction is (2R)-2-phosphoglycerate = (2R)-3-phosphoglycerate. It functions in the pathway carbohydrate degradation; glycolysis; pyruvate from D-glyceraldehyde 3-phosphate: step 3/5. In terms of biological role, catalyzes the interconversion of 2-phosphoglycerate and 3-phosphoglycerate. The polypeptide is 2,3-bisphosphoglycerate-dependent phosphoglycerate mutase (Burkholderia orbicola (strain MC0-3)).